We begin with the raw amino-acid sequence, 296 residues long: Nucleotide-binding protein Rmet_0297 (296 aa).

8–15 (GISGSGKS) is an ATP binding site. 57 to 60 (DIRS) is a binding site for GTP.

Belongs to the RapZ-like family.

Displays ATPase and GTPase activities. The protein is Nucleotide-binding protein Rmet_0297 of Cupriavidus metallidurans (strain ATCC 43123 / DSM 2839 / NBRC 102507 / CH34) (Ralstonia metallidurans).